Reading from the N-terminus, the 98-residue chain is uncharacterized protein (98 aa).

Positions 1–10 are enriched in basic residues; it reads MARRRKPLHR. A disordered region spans residues 1–21; it reads MARRRKPLHRQRPEPPSWALR.

This is an uncharacterized protein from Mycobacterium bovis (strain ATCC BAA-935 / AF2122/97).